A 477-amino-acid polypeptide reads, in one-letter code: Bifunctional protein HldE (477 aa).

A ribokinase region spans residues 1–318; that stretch reads MKVTLPEFER…ENAVRGRADT (318 aa). Lys-179 carries the post-translational modification N6-acetyllysine. Residue 195 to 198 participates in ATP binding; the sequence is NLSE. Residue Asp-264 is part of the active site. The interval 344 to 477 is cytidylyltransferase; that stretch reads MTNGVFDILH…IKKIQQDKKG (134 aa).

The protein in the N-terminal section; belongs to the carbohydrate kinase PfkB family. In the C-terminal section; belongs to the cytidylyltransferase family. In terms of assembly, homodimer.

It catalyses the reaction D-glycero-beta-D-manno-heptose 7-phosphate + ATP = D-glycero-beta-D-manno-heptose 1,7-bisphosphate + ADP + H(+). The catalysed reaction is D-glycero-beta-D-manno-heptose 1-phosphate + ATP + H(+) = ADP-D-glycero-beta-D-manno-heptose + diphosphate. It participates in nucleotide-sugar biosynthesis; ADP-L-glycero-beta-D-manno-heptose biosynthesis; ADP-L-glycero-beta-D-manno-heptose from D-glycero-beta-D-manno-heptose 7-phosphate: step 1/4. The protein operates within nucleotide-sugar biosynthesis; ADP-L-glycero-beta-D-manno-heptose biosynthesis; ADP-L-glycero-beta-D-manno-heptose from D-glycero-beta-D-manno-heptose 7-phosphate: step 3/4. Its function is as follows. Catalyzes the phosphorylation of D-glycero-D-manno-heptose 7-phosphate at the C-1 position to selectively form D-glycero-beta-D-manno-heptose-1,7-bisphosphate. Catalyzes the ADP transfer from ATP to D-glycero-beta-D-manno-heptose 1-phosphate, yielding ADP-D-glycero-beta-D-manno-heptose. The sequence is that of Bifunctional protein HldE from Escherichia coli (strain 55989 / EAEC).